Here is a 234-residue protein sequence, read N- to C-terminus: Core atranone cluster (CAC) protein 1 (234 aa).

It participates in mycotoxin biosynthesis. In terms of biological role, part of the core atranone cluster (CAC) which products are predicted to catalyze most or all steps of mycotoxin atranone synthesis, starting from geranylgeranyl pyrophosphate (GGPP). The initial cyclization of GGPP to dolabellane is probably performed by the terpene cyclase ATR13. The Baeyer-Villiger oxidation near the end of the atranone synthesis, which converts atranones D and E to atranones F and G is predicted to be catalyzed by the monooxygenase ATR8. Of the CAC's other predicted gene products, the reducing PKS ATR6 might synthesize a polyketide chain. This polyketide is probably transferred onto the atranone backbone by the polyketide transferase ATR5. Other predicted CAC products include 4 oxygenases (ATR2, ATR3, ATR4, and ATR14), 3 short-chain reductases (ATR7, ATR9, and ATR10), and a methyltransferase (ATR12). These may all be involved in the various steps of atranone biosynthesis, although their specific roles must await experimental determination. In Stachybotrys chlorohalonatus (strain IBT 40285), this protein is Core atranone cluster (CAC) protein 1.